We begin with the raw amino-acid sequence, 509 residues long: UDP-N-acetylmuramoylalanine--D-glutamate ligase (509 aa).

An ATP-binding site is contributed by 116-122 (GTNGKST).

This sequence belongs to the MurCDEF family.

It localises to the cytoplasm. It catalyses the reaction UDP-N-acetyl-alpha-D-muramoyl-L-alanine + D-glutamate + ATP = UDP-N-acetyl-alpha-D-muramoyl-L-alanyl-D-glutamate + ADP + phosphate + H(+). Its pathway is cell wall biogenesis; peptidoglycan biosynthesis. Cell wall formation. Catalyzes the addition of glutamate to the nucleotide precursor UDP-N-acetylmuramoyl-L-alanine (UMA). This Wolbachia pipientis wMel protein is UDP-N-acetylmuramoylalanine--D-glutamate ligase.